The following is a 110-amino-acid chain: Phosphoribosyl-ATP pyrophosphatase (110 aa).

The protein belongs to the PRA-PH family.

The protein localises to the cytoplasm. It carries out the reaction 1-(5-phospho-beta-D-ribosyl)-ATP + H2O = 1-(5-phospho-beta-D-ribosyl)-5'-AMP + diphosphate + H(+). It participates in amino-acid biosynthesis; L-histidine biosynthesis; L-histidine from 5-phospho-alpha-D-ribose 1-diphosphate: step 2/9. The chain is Phosphoribosyl-ATP pyrophosphatase from Pseudomonas syringae pv. syringae (strain B728a).